A 353-amino-acid chain; its full sequence is THUMP domain-containing protein 1 (353 aa).

A compositionally biased stretch (polar residues) spans 1 to 10 (MAAPAQQTTQ). 2 disordered regions span residues 1-20 (MAAPAQQTTQPGGGKRKGKA) and 73-96 (YGPEKFTDKDQQPSGSEGEDDDAE). A2 carries the post-translational modification N-acetylalanine. Position 79 is a phosphothreonine (T79). A phosphoserine mark is found at S86, S88, and S119. Residues 147–254 (DMYKTKKKKT…KAVCCLSVVK (108 aa)) form the THUMP domain. S270 is modified (phosphoserine). A disordered region spans residues 270-353 (SPKDPSQLNS…GSKSNENDFS (84 aa)). Over residues 273–282 (DPSQLNSKQG) the composition is skewed to polar residues. The segment covering 283–296 (NGKEAKLESADKSD) has biased composition (basic and acidic residues). The span at 297-327 (QNNTAEGKNNQQVPENTEELGQTKPTSNPQV) shows a compositional bias: polar residues.

Belongs to the THUMPD1 family. Interacts with NAT10. Binds tRNA.

Functions as a tRNA-binding adapter to mediate NAT10-dependent tRNA acetylation modifying cytidine to N4-acetylcytidine (ac4C). This Homo sapiens (Human) protein is THUMP domain-containing protein 1 (THUMPD1).